Here is a 497-residue protein sequence, read N- to C-terminus: Lysine--tRNA ligase (497 aa).

2 residues coordinate Mg(2+): glutamate 406 and glutamate 413.

Belongs to the class-II aminoacyl-tRNA synthetase family. Homodimer. It depends on Mg(2+) as a cofactor.

Its subcellular location is the cytoplasm. The enzyme catalyses tRNA(Lys) + L-lysine + ATP = L-lysyl-tRNA(Lys) + AMP + diphosphate. The sequence is that of Lysine--tRNA ligase from Rhizobium leguminosarum bv. trifolii (strain WSM2304).